The sequence spans 186 residues: MGLSDLSKTPGQALGDMVQLGNVESVIQWGRSYSLWPYPFATACCGIEYMSTACSDYDIARFGAERPSFSPRQADMILVLGTITYKMAPVLRQIYDQMAEPKFVISVGACASSGGMFHTYGVLQGVDRILPVDVYVPGCPPRPEAILDALLKLQTKLKTQGLEARRQEVMQKIQELNERNKPLVVR.

4 residues coordinate [4Fe-4S] cluster: cysteine 44, cysteine 45, cysteine 110, and cysteine 139.

Belongs to the complex I 20 kDa subunit family. NDH-1 is composed of 14 different subunits. Subunits NuoB, C, D, E, F, and G constitute the peripheral sector of the complex. The cofactor is [4Fe-4S] cluster.

The protein resides in the cell inner membrane. The enzyme catalyses a quinone + NADH + 5 H(+)(in) = a quinol + NAD(+) + 4 H(+)(out). Functionally, NDH-1 shuttles electrons from NADH, via FMN and iron-sulfur (Fe-S) centers, to quinones in the respiratory chain. The immediate electron acceptor for the enzyme in this species is believed to be ubiquinone. Couples the redox reaction to proton translocation (for every two electrons transferred, four hydrogen ions are translocated across the cytoplasmic membrane), and thus conserves the redox energy in a proton gradient. This Leptospira interrogans serogroup Icterohaemorrhagiae serovar copenhageni (strain Fiocruz L1-130) protein is NADH-quinone oxidoreductase subunit B.